A 529-amino-acid chain; its full sequence is Probable anion transporter 1, chloroplastic (529 aa).

A chloroplast-targeting transit peptide spans 1–55 (MLYLLPLSVSCRVPGSPPAPRSRRFLDPGGGRGVGDGLGGVRVFRRRALRGTDVR). Disordered regions lie at residues 13–39 (VPGS…DGLG) and 52–78 (TDVR…GGYG). A compositionally biased stretch (gly residues) spans 28–39 (PGGGRGVGDGLG). The segment covering 67-76 (RHDDARHDGG) has biased composition (basic and acidic residues). 11 helical membrane passes run 120–140 (WAIV…RVNM), 158–178 (VGLI…AGGI), 187–207 (TVLG…PFAA), 209–229 (LGLP…GVAM), 251–271 (LVYS…PLLI), 274–294 (FGWP…FSTW), 340–360 (VWAL…LLTW), 378–398 (LFCV…GWIA), 418–438 (IGFL…SPAM), 469–489 (AGVL…FGTA), and 503–523 (VFKV…LFST).

The protein belongs to the major facilitator superfamily. Sodium/anion cotransporter (TC 2.A.1.14) family.

It is found in the plastid. Its subcellular location is the chloroplast membrane. Functionally, probable anion transporter. This chain is Probable anion transporter 1, chloroplastic (PHT4;1), found in Oryza sativa subsp. japonica (Rice).